The primary structure comprises 548 residues: uncharacterized protein (548 aa).

Residues 8–200 enclose the DhaL domain; that stretch reads KLFADMIIQG…LLCVYEGFLK (193 aa).

This is an uncharacterized protein from Staphylococcus aureus (strain NCTC 8325 / PS 47).